The chain runs to 705 residues: Elongation factor G (705 aa).

The region spanning 8 to 290 (AYYRNIGISA…AVIEYLPAPT (283 aa)) is the tr-type G domain. GTP-binding positions include 17–24 (AHIDAGKT), 88–92 (DTPGH), and 142–145 (NKMD).

The protein belongs to the TRAFAC class translation factor GTPase superfamily. Classic translation factor GTPase family. EF-G/EF-2 subfamily.

It is found in the cytoplasm. Its function is as follows. Catalyzes the GTP-dependent ribosomal translocation step during translation elongation. During this step, the ribosome changes from the pre-translocational (PRE) to the post-translocational (POST) state as the newly formed A-site-bound peptidyl-tRNA and P-site-bound deacylated tRNA move to the P and E sites, respectively. Catalyzes the coordinated movement of the two tRNA molecules, the mRNA and conformational changes in the ribosome. This chain is Elongation factor G, found in Baumannia cicadellinicola subsp. Homalodisca coagulata.